A 172-amino-acid chain; its full sequence is Adenine phosphoribosyltransferase (172 aa).

Belongs to the purine/pyrimidine phosphoribosyltransferase family. In terms of assembly, homodimer.

The protein resides in the cytoplasm. The enzyme catalyses AMP + diphosphate = 5-phospho-alpha-D-ribose 1-diphosphate + adenine. It functions in the pathway purine metabolism; AMP biosynthesis via salvage pathway; AMP from adenine: step 1/1. Its function is as follows. Catalyzes a salvage reaction resulting in the formation of AMP, that is energically less costly than de novo synthesis. The sequence is that of Adenine phosphoribosyltransferase from Prochlorococcus marinus (strain NATL1A).